A 502-amino-acid chain; its full sequence is Glycerol kinase (502 aa).

Thr-14 contacts ADP. ATP-binding residues include Thr-14, Thr-15, and Ser-16. Thr-14 lines the sn-glycerol 3-phosphate pocket. Residue Arg-18 participates in ADP binding. The sn-glycerol 3-phosphate site is built by Arg-84, Glu-85, Tyr-136, and Asp-246. The glycerol site is built by Arg-84, Glu-85, Tyr-136, Asp-246, and Gln-247. ADP contacts are provided by Thr-268 and Gly-311. Residues Thr-268, Gly-311, Gln-315, and Gly-412 each contribute to the ATP site. ADP contacts are provided by Gly-412 and Asn-416.

This sequence belongs to the FGGY kinase family. As to quaternary structure, homotetramer and homodimer (in equilibrium). Heterodimer with EIIA-Glc. Binds 1 zinc ion per glycerol kinase EIIA-Glc dimer. The zinc ion is important for dimerization.

It carries out the reaction glycerol + ATP = sn-glycerol 3-phosphate + ADP + H(+). It participates in polyol metabolism; glycerol degradation via glycerol kinase pathway; sn-glycerol 3-phosphate from glycerol: step 1/1. With respect to regulation, activity of this regulatory enzyme is affected by several metabolites. Allosterically and non-competitively inhibited by fructose 1,6-bisphosphate (FBP) and unphosphorylated phosphocarrier protein EIIA-Glc (III-Glc), an integral component of the bacterial phosphotransferase (PTS) system. Functionally, key enzyme in the regulation of glycerol uptake and metabolism. Catalyzes the phosphorylation of glycerol to yield sn-glycerol 3-phosphate. The sequence is that of Glycerol kinase from Escherichia coli O81 (strain ED1a).